Consider the following 316-residue polypeptide: DNA-directed RNA polymerase III subunit RPC6 (316 aa).

At alanine 2 the chain carries N-acetylalanine. Glycyl lysine isopeptide (Lys-Gly) (interchain with G-Cter in SUMO2) cross-links involve residues lysine 5 and lysine 7. Cysteine 287, cysteine 290, cysteine 296, and cysteine 307 together coordinate [4Fe-4S] cluster.

This sequence belongs to the eukaryotic RPC34/RPC39 RNA polymerase subunit family. As to quaternary structure, component of the RNA polymerase III complex consisting of 17 subunits: a ten-subunit horseshoe-shaped catalytic core composed of POLR3A/RPC1, POLR3B/RPC2, POLR1C/RPAC1, POLR1D/RPAC2, POLR3K/RPC10, POLR2E/RPABC1, POLR2F/RPABC2, POLR2H/RPABC3, POLR2K/RPABC4 and POLR2L/RPABC5; a mobile stalk composed of two subunits POLR3H/RPC8 and CRCP/RPC9, protruding from the core and functioning primarily in transcription initiation; and additional subunits homologous to general transcription factors of the RNA polymerase II machinery, POLR3C/RPC3-POLR3F/RPC6-POLR3G/RPC7 heterotrimer required for transcription initiation and POLR3D/RPC4-POLR3E/RPC5 heterodimer involved in both transcription initiation and termination. Directly interacts with POLR3C. Interacts with TBP and TFIIIB90 and GTF3C4. Interacts with MAF1. As part of the RNA polymerase III complex, interacts with PKP2.

Its subcellular location is the nucleus. DNA-dependent RNA polymerase catalyzes the transcription of DNA into RNA using the four ribonucleoside triphosphates as substrates. Specific peripheric component of RNA polymerase III (Pol III) which synthesizes small non-coding RNAs including 5S rRNA, snRNAs, tRNAs and miRNAs from at least 500 distinct genomic loci. Part of POLR3C/RPC3-POLR3F/RPC6-POLR3G/RPC7 heterotrimer that coordinates the dynamics of Pol III stalk and clamp modules during the transition from apo to elongation state. Pol III plays a key role in sensing and limiting infection by intracellular bacteria and DNA viruses, including varicella zoster virus. Acts as a nuclear and cytosolic DNA sensor detecting AT-rich DNA, involved in innate immune response. Can sense non-self dsDNA that serves as template for transcription into dsRNA. The non-self RNA polymerase III transcripts, such as Epstein-Barr virus-encoded RNAs (EBERs) induce type I interferon and NF-kappa-B through the RIG-I pathway. Preferentially binds double-stranded DNA (dsDNA). The chain is DNA-directed RNA polymerase III subunit RPC6 from Homo sapiens (Human).